A 197-amino-acid chain; its full sequence is ATP-dependent Clp protease proteolytic subunit (197 aa).

The active-site Nucleophile is the S98. The active site involves H123.

It belongs to the peptidase S14 family. As to quaternary structure, fourteen ClpP subunits assemble into 2 heptameric rings which stack back to back to give a disk-like structure with a central cavity, resembling the structure of eukaryotic proteasomes.

The protein localises to the cytoplasm. The enzyme catalyses Hydrolysis of proteins to small peptides in the presence of ATP and magnesium. alpha-casein is the usual test substrate. In the absence of ATP, only oligopeptides shorter than five residues are hydrolyzed (such as succinyl-Leu-Tyr-|-NHMec, and Leu-Tyr-Leu-|-Tyr-Trp, in which cleavage of the -Tyr-|-Leu- and -Tyr-|-Trp bonds also occurs).. Functionally, cleaves peptides in various proteins in a process that requires ATP hydrolysis. Has a chymotrypsin-like activity. Plays a major role in the degradation of misfolded proteins. The sequence is that of ATP-dependent Clp protease proteolytic subunit from Haemophilus ducreyi (strain 35000HP / ATCC 700724).